Reading from the N-terminus, the 386-residue chain is Patatin group M-3 (386 aa).

Residues 1 to 23 (MATTKSFLILFFMILATTSSTCA) form the signal peptide. Residues 32 to 229 (LSIDGGGIKG…TVGDPALLSL (198 aa)) form the PNPLA domain. The short motif at 36–41 (GGGIKG) is the GXGXXG element. The short motif at 75 to 79 (GTSTG) is the GXSXG element. The Nucleophile role is filled by serine 77. N-linked (GlcNAc...) asparagine glycosylation occurs at asparagine 115. Catalysis depends on aspartate 215, which acts as the Proton acceptor. The DGA/G motif lies at 215–217 (DGG). Positions 321 to 384 (ENALTGTTTE…DRKKLRANKA (64 aa)) form a coiled coil.

The protein belongs to the patatin family. As to expression, tuber.

It localises to the vacuole. Functionally, probable lipolytic acyl hydrolase (LAH), an activity which is thought to be involved in the response of tubers to pathogens. The protein is Patatin group M-3 of Solanum tuberosum (Potato).